The following is a 569-amino-acid chain: MFMSSDANACEIDIKPRSRVVTHGIEATTSRGMLRAVGMGDADWEKPQIGIASSWNNITPCNLSLDRLAQGAREGVHAAGGYPLQFCTISVSDGISMGHEGMHFSLVSREVITDSVETVLMAEALDGVVLLAGCDKSLPGMLMAAARLDVSAVFLYAGSIAPGYVTLKCGESKEVTIIDSFEAVGAYKAGLIDQDDLGRIERAICPGEGACGGMYTANTMASVAEALGMSLLGSASPPSADRRRDVYAHKSGEAVVELLKRGITARDILTKEAFENAIAVVMALGGSTNAVLHLLAIAHEAHVPLTIDDFNKIGNRVPHIADLKPFGRYVMNDVDRVGGIPVVINALMREGFIHGDVITVSGRTMAEEISDINPGLPDGKVIHSFSSPLHPTGGIKVLKGTLAPDGAVAKTAGFDTVVFQGPAMVFDRERAAMDALSAGNIKKGSVIVIRYEGPKGGPGMREMLAITAAIKGSGLGKDVLLLTDGRFSGGTTGLCIGHIAPEAVDLGPIAFVQDGDIIRVDIEKSGIDVLVDEKQLRARHLTPPPPRYTSGVLSKYSKLVKSASLGAIT.

Residue cysteine 61 participates in [2Fe-2S] cluster binding. Aspartate 93 contributes to the Mg(2+) binding site. Residue cysteine 134 coordinates [2Fe-2S] cluster. Mg(2+) contacts are provided by aspartate 135 and lysine 136. Lysine 136 is modified (N6-carboxylysine). Residue cysteine 211 participates in [2Fe-2S] cluster binding. Glutamate 462 serves as a coordination point for Mg(2+). Residue serine 488 is the Proton acceptor of the active site.

The protein belongs to the IlvD/Edd family. Homodimer. [2Fe-2S] cluster is required as a cofactor. Requires Mg(2+) as cofactor.

It carries out the reaction (2R)-2,3-dihydroxy-3-methylbutanoate = 3-methyl-2-oxobutanoate + H2O. The enzyme catalyses (2R,3R)-2,3-dihydroxy-3-methylpentanoate = (S)-3-methyl-2-oxopentanoate + H2O. Its pathway is amino-acid biosynthesis; L-isoleucine biosynthesis; L-isoleucine from 2-oxobutanoate: step 3/4. It functions in the pathway amino-acid biosynthesis; L-valine biosynthesis; L-valine from pyruvate: step 3/4. Its function is as follows. Functions in the biosynthesis of branched-chain amino acids. Catalyzes the dehydration of (2R,3R)-2,3-dihydroxy-3-methylpentanoate (2,3-dihydroxy-3-methylvalerate) into 2-oxo-3-methylpentanoate (2-oxo-3-methylvalerate) and of (2R)-2,3-dihydroxy-3-methylbutanoate (2,3-dihydroxyisovalerate) into 2-oxo-3-methylbutanoate (2-oxoisovalerate), the penultimate precursor to L-isoleucine and L-valine, respectively. The chain is Dihydroxy-acid dehydratase from Tropheryma whipplei (strain Twist) (Whipple's bacillus).